We begin with the raw amino-acid sequence, 726 residues long: X-ray repair cross-complementing protein 5 (726 aa).

In terms of domain architecture, VWFA spans 8-160; that stretch reads AVVLCMDVGL…ANLKKAEITL (153 aa). The leucine-zipper stretch occupies residues 137 to 164; sequence LSSPFSVDQLEVIIANLKKAEITLQFFL. Positions 175–186 are enriched in low complexity; it reads GSSNNRGNAGSS. Residues 175–198 are disordered; that stretch reads GSSNNRGNAGSSDRGCGPGKGLSD. A Ku domain is found at 253–449; that stretch reads GSSLSIRIVG…NKKFTPTESQ (197 aa). An EEXXXDL motif motif is present at residues 714–722; sequence EDEGDVDDL.

It belongs to the ku80 family. As to quaternary structure, heterodimer composed of xrcc5/Ku80 and xrcc6/Ku70. In terms of processing, ubiquitinated via 'Lys-48'-linked polyubiquitination at DNA double strand break sites (DSBs), leading to its release from DSBs and subsequent proteasomal degradation. Polyubiquitination is not required for completion of NHEJ. As to expression, expressed at high levels in oocyte and testis.

It localises to the nucleus. Single-stranded DNA-dependent ATP-dependent helicase that plays a key role in DNA non-homologous end joining (NHEJ). The polypeptide is X-ray repair cross-complementing protein 5 (Xenopus laevis (African clawed frog)).